The primary structure comprises 204 residues: Holliday junction branch migration complex subunit RuvA (204 aa).

Positions 1–64 (MIAQLKGSLA…EDAFLLYGFH (64 aa)) are domain I. The segment at 65 to 143 (SESQRKVFNL…ALPMAAPTTA (79 aa)) is domain II. The interval 144-154 (IGAATMAANPA) is flexible linker. The interval 154-204 (AGLREEVASALLNLGYKPPQVDAALAKLFSAGEITDISVALKGALKLLAPA) is domain III.

Belongs to the RuvA family. In terms of assembly, homotetramer. Forms an RuvA(8)-RuvB(12)-Holliday junction (HJ) complex. HJ DNA is sandwiched between 2 RuvA tetramers; dsDNA enters through RuvA and exits via RuvB. An RuvB hexamer assembles on each DNA strand where it exits the tetramer. Each RuvB hexamer is contacted by two RuvA subunits (via domain III) on 2 adjacent RuvB subunits; this complex drives branch migration. In the full resolvosome a probable DNA-RuvA(4)-RuvB(12)-RuvC(2) complex forms which resolves the HJ.

It localises to the cytoplasm. Functionally, the RuvA-RuvB-RuvC complex processes Holliday junction (HJ) DNA during genetic recombination and DNA repair, while the RuvA-RuvB complex plays an important role in the rescue of blocked DNA replication forks via replication fork reversal (RFR). RuvA specifically binds to HJ cruciform DNA, conferring on it an open structure. The RuvB hexamer acts as an ATP-dependent pump, pulling dsDNA into and through the RuvAB complex. HJ branch migration allows RuvC to scan DNA until it finds its consensus sequence, where it cleaves and resolves the cruciform DNA. The sequence is that of Holliday junction branch migration complex subunit RuvA from Magnetococcus marinus (strain ATCC BAA-1437 / JCM 17883 / MC-1).